We begin with the raw amino-acid sequence, 109 residues long: Resistin (109 aa).

The N-terminal stretch at 1 to 18 (MKALSFLFIPVLGLLVCG) is a signal peptide. Disulfide bonds link Cys51/Cys104, Cys63/Cys103, Cys72/Cys89, Cys74/Cys91, and Cys78/Cys93.

The protein belongs to the resistin/FIZZ family. In terms of assembly, homodimer; disulfide-linked.

It localises to the secreted. Hormone that seems to suppress insulin ability to stimulate glucose uptake into adipose cells. Potentially links obesity to diabetes. The sequence is that of Resistin (RETN) from Bos taurus (Bovine).